An 894-amino-acid chain; its full sequence is DNA mismatch repair protein MutS (894 aa).

ATP is bound at residue 632 to 639 (GPNMGGKS).

It belongs to the DNA mismatch repair MutS family.

This protein is involved in the repair of mismatches in DNA. It is possible that it carries out the mismatch recognition step. This protein has a weak ATPase activity. In Paraburkholderia xenovorans (strain LB400), this protein is DNA mismatch repair protein MutS.